A 382-amino-acid chain; its full sequence is Chorismate synthase (382 aa).

NADP(+) is bound by residues R39 and R45. FMN contacts are provided by residues 127-129 (RAS), 245-246 (QA), G290, 305-309 (KPIPT), and R331.

It belongs to the chorismate synthase family. Homotetramer. The cofactor is FMNH2.

It carries out the reaction 5-O-(1-carboxyvinyl)-3-phosphoshikimate = chorismate + phosphate. Its pathway is metabolic intermediate biosynthesis; chorismate biosynthesis; chorismate from D-erythrose 4-phosphate and phosphoenolpyruvate: step 7/7. Catalyzes the anti-1,4-elimination of the C-3 phosphate and the C-6 proR hydrogen from 5-enolpyruvylshikimate-3-phosphate (EPSP) to yield chorismate, which is the branch point compound that serves as the starting substrate for the three terminal pathways of aromatic amino acid biosynthesis. This reaction introduces a second double bond into the aromatic ring system. The sequence is that of Chorismate synthase from Desulfitobacterium hafniense (strain DSM 10664 / DCB-2).